Consider the following 387-residue polypeptide: EARP and GARP complex-interacting protein 1 (387 aa).

Met-1 carries the N-acetylmethionine modification. WD repeat units follow at residues 132-172 (TAHS…SQAV), 180-222 (GGKG…QIYC), 226-266 (AHGQ…EPVK), and 270-310 (EHSH…SEPF). The segment at 310-334 (FGHLVDDDDISDQEDHRSEEKSKEP) is disordered. Ser-320 is subject to Phosphoserine. Basic and acidic residues predominate over residues 322-334 (QEDHRSEEKSKEP). Residues 345 to 385 (EHEDSVYAVDWSSADPWLFASLSYDGRLVINRVPRALKYHI) form a WD 5 repeat.

The protein belongs to the WD repeat EIPR1 family. In terms of assembly, interacts with two multisubunit tethering complexes: EARP composed of VPS50, VPS51, VPS52 and VPS53 subunits and GARP complex composed of VPS51, VPS52, VPS53 and VPS54 subunits. Interacts with SNAP29.

It localises to the golgi apparatus. Its subcellular location is the trans-Golgi network. Acts as a component of endosomal retrieval machinery that is involved in protein transport from early endosomes to either recycling endosomes or the trans-Golgi network. Mediates the recruitment of Golgi-associated retrograde protein (GARP) complex to the trans-Golgi network and controls early endosome-to-Golgi transport of internalized protein. Promotes the recycling of internalized transferrin receptor (TFRC) to the plasma membrane through interaction with endosome-associated recycling protein (EARP) complex. Controls proper insulin distribution and secretion, and retention of cargo in mature dense core vesicles. Required for the stability of the endosome-associated retrograde protein (EARP) complex subunits and for proper localization and association of EARP with membranes. The sequence is that of EARP and GARP complex-interacting protein 1 from Macaca fascicularis (Crab-eating macaque).